The primary structure comprises 360 residues: Protein phosphatase 1L (360 aa).

Residues 1–25 (MIEDTMTLLSLLGRIMRYFLLRPET) lie on the Extracellular side of the membrane. A helical transmembrane segment spans residues 26–42 (LFLLCISLALWSYFFHT). Topologically, residues 43–360 (DEVKTIVKSS…FRNSSKTEEQ (318 aa)) are cytoplasmic. The region spanning 92–351 (NVAVYSIQGR…DNITVMVVKF (260 aa)) is the PPM-type phosphatase domain. Mn(2+) is bound by residues aspartate 128, glycine 129, aspartate 302, and aspartate 342.

Belongs to the PP2C family. In terms of assembly, interacts with MAP3K7/TAK1. Interacts with MAP3K5. The cofactor is Mg(2+). Requires Mn(2+) as cofactor. Ubiquitous. Highly expressed in heart, placenta, lung, liver, kidney and pancreas.

It is found in the membrane. It catalyses the reaction O-phospho-L-seryl-[protein] + H2O = L-seryl-[protein] + phosphate. The enzyme catalyses O-phospho-L-threonyl-[protein] + H2O = L-threonyl-[protein] + phosphate. Acts as a suppressor of the SAPK signaling pathways by associating with and dephosphorylating MAP3K7/TAK1 and MAP3K5, and by attenuating the association between MAP3K7/TAK1 and MAP2K4 or MAP2K6. The polypeptide is Protein phosphatase 1L (PPM1L) (Homo sapiens (Human)).